The sequence spans 292 residues: 5,10-methylenetetrahydrofolate reductase (292 aa).

Residue glutamate 28 is the Proton donor/acceptor of the active site. Threonine 59 is an NADH binding site. Tyrosine 60, alanine 62, histidine 88, arginine 118, glycine 119, aspartate 120, alanine 132, tyrosine 152, histidine 156, aspartate 165, asparagine 168, lysine 171, and lysine 172 together coordinate FAD. Residue aspartate 120 coordinates (6S)-5-methyl-5,6,7,8-tetrahydrofolate. Residue glutamine 183 participates in NADH binding. Glutamine 183, glutamine 219, and lysine 279 together coordinate (6S)-5-methyl-5,6,7,8-tetrahydrofolate.

This sequence belongs to the methylenetetrahydrofolate reductase family. It depends on FAD as a cofactor.

The catalysed reaction is (6S)-5-methyl-5,6,7,8-tetrahydrofolate + NAD(+) = (6R)-5,10-methylene-5,6,7,8-tetrahydrofolate + NADH + H(+). Its pathway is one-carbon metabolism; tetrahydrofolate interconversion. It participates in amino-acid biosynthesis; L-methionine biosynthesis via de novo pathway. Catalyzes the NADH-dependent reduction of 5,10-methylenetetrahydrofolate to 5-methyltetrahydrofolate. Is required to provide the methyl group necessary for methionine synthetase to convert homocysteine to methionine; the methyl group is given by 5-methyltetrahydrofolate. This chain is 5,10-methylenetetrahydrofolate reductase (metF), found in Buchnera aphidicola subsp. Schizaphis graminum (strain Sg).